The chain runs to 215 residues: Cytochrome b6 (215 aa).

Residues 32–52 (IFYCLGGITLTCFLVQVATGF) form a helical membrane-spanning segment. Cys35 is a heme c binding site. Heme b is bound by residues His86 and His100. The next 3 membrane-spanning stretches (helical) occupy residues 90-110 (ASMM…TGGF), 116-136 (LTWV…VTGY), and 186-206 (LHTF…FLMI). The heme b site is built by His187 and His202.

The protein belongs to the cytochrome b family. PetB subfamily. As to quaternary structure, the 4 large subunits of the cytochrome b6-f complex are cytochrome b6, subunit IV (17 kDa polypeptide, PetD), cytochrome f and the Rieske protein, while the 4 small subunits are PetG, PetL, PetM and PetN. The complex functions as a dimer. Requires heme b as cofactor. Heme c serves as cofactor.

Its subcellular location is the plastid. The protein resides in the chloroplast thylakoid membrane. Component of the cytochrome b6-f complex, which mediates electron transfer between photosystem II (PSII) and photosystem I (PSI), cyclic electron flow around PSI, and state transitions. This chain is Cytochrome b6, found in Marchantia polymorpha (Common liverwort).